The following is a 131-amino-acid chain: Cuticle protein 79, isoform A (131 aa).

3 tandem repeats follow at residues 37–40 (AAPA), 45–48 (AAPA), and 53–56 (AAPA).

In terms of biological role, component of the cuticle of migratory locust which contains more than 100 different structural proteins. The protein is Cuticle protein 79, isoform A of Locusta migratoria (Migratory locust).